The following is a 496-amino-acid chain: Adenosine transporter 1 (496 aa).

Residues 1–26 lie on the Cytoplasmic side of the membrane; it reads MSSHTSTPNHASAAPPRKWYDMTSAE. The chain crosses the membrane as a helical span at residues 27-47; sequence FYVYVVAFMCGISMLMPINAV. The Extracellular portion of the chain corresponds to 48–77; that stretch reads FSAPSYMLQYYLYATKDPNHVPQMTNFWSN. The chain crosses the membrane as a helical span at residues 78 to 98; that stretch reads VMTYYNLIGLVTGLVMEPLTL. Residues 99–107 are Cytoplasmic-facing; that stretch reads LKSFRKIPM. The chain crosses the membrane as a helical span at residues 108-128; it reads LVRLLGGLCILIVEIIVLMAV. The Extracellular segment spans residues 129-135; it reads PARGTTE. Residues 136–156 form a helical membrane-spanning segment; sequence GGAVATMCIAGFIGGLGKSIF. The Cytoplasmic portion of the chain corresponds to 157 to 172; the sequence is ESTVYGMFGAFPPSFT. Residues 173–193 traverse the membrane as a helical segment; sequence SIMMGGVGISGVLTSLIQIIV. Residues 194-208 are Extracellular-facing; sequence KAALPDTYEGVKKQS. The chain crosses the membrane as a helical span at residues 209 to 229; sequence YIYYSLDVGIQAATFIALIMM. Topologically, residues 230–336 are cytoplasmic; it reads RFNSFAQLHF…SIISVLRSIK (107 aa). The helical transmembrane segment at 337–357 threads the bilayer; the sequence is WMFVSCAFVFVVTLFLFPGIA. Topologically, residues 358 to 365 are extracellular; it reads TGMFPESK. Residues 366 to 386 traverse the membrane as a helical segment; that stretch reads WFATVAVFIFNCCDVLGRVAP. The Cytoplasmic segment spans residues 387 to 399; that stretch reads ALRFMWPRSYNQR. The helical transmembrane segment at 400 to 420 threads the bilayer; it reads WIIVAASFARVIFVPLLLLYS. Over 421-431 the chain is Extracellular; it reads YHYIPSEAYGY. Residues 432 to 452 form a helical membrane-spanning segment; the sequence is VIMVIFGFSSGYVASMSLTLG. Residues 453–464 are Cytoplasmic-facing; it reads PQSKGIDNDGKR. Residues 465-485 traverse the membrane as a helical segment; that stretch reads FVAGTLMGISILVGGTIGTVL. The Extracellular portion of the chain corresponds to 486-496; that stretch reads SIMTQTIREKY.

Belongs to the SLC29A/ENT transporter (TC 2.A.57) family.

The protein localises to the membrane. The enzyme catalyses adenosine(in) = adenosine(out). Its function is as follows. Adenosine transporter. This is Adenosine transporter 1 from Crithidia fasciculata.